The chain runs to 163 residues: Single-stranded DNA-binding protein 2 (163 aa).

The SSB domain occupies 1 to 104; it reads MINNVVLVGR…VVADNFQMLE (104 aa). The disordered stretch occupies residues 109-163; the sequence is REGGSTGSFNGGFNNNTSSSNSYSAPAQQTPNFGRDDSPFGNSNPMDISDDDLPF. Over residues 119–130 the composition is skewed to low complexity; it reads GGFNNNTSSSNS. Over residues 131 to 140 the composition is skewed to polar residues; the sequence is YSAPAQQTPN. The Important for interaction with partner proteins signature appears at 158–163; it reads DDDLPF.

As to quaternary structure, homotetramer.

Plays an important role in DNA replication, recombination and repair. Binds to ssDNA and to an array of partner proteins to recruit them to their sites of action during DNA metabolism. This Streptococcus pyogenes serotype M18 (strain MGAS8232) protein is Single-stranded DNA-binding protein 2 (ssb2).